Consider the following 299-residue polypeptide: Ribosomal RNA small subunit methyltransferase H 1 (299 aa).

S-adenosyl-L-methionine is bound by residues 31 to 33 (GGH), D50, F76, D97, and Q104.

It belongs to the methyltransferase superfamily. RsmH family.

The protein resides in the cytoplasm. It catalyses the reaction cytidine(1402) in 16S rRNA + S-adenosyl-L-methionine = N(4)-methylcytidine(1402) in 16S rRNA + S-adenosyl-L-homocysteine + H(+). Specifically methylates the N4 position of cytidine in position 1402 (C1402) of 16S rRNA. In Acholeplasma laidlawii (strain PG-8A), this protein is Ribosomal RNA small subunit methyltransferase H 1.